The following is a 920-amino-acid chain: Isoleucine--tRNA ligase (920 aa).

Residues 58-68 carry the 'HIGH' region motif; that stretch reads PYANGHLHLGH. Glu569 contacts L-isoleucyl-5'-AMP. Residues 610–614 carry the 'KMSKS' region motif; it reads KMSKS. An ATP-binding site is contributed by Lys613. Residues Cys895, Cys898, Cys910, and Cys913 each coordinate Zn(2+).

The protein belongs to the class-I aminoacyl-tRNA synthetase family. IleS type 1 subfamily. In terms of assembly, monomer. The cofactor is Zn(2+).

The protein resides in the cytoplasm. It catalyses the reaction tRNA(Ile) + L-isoleucine + ATP = L-isoleucyl-tRNA(Ile) + AMP + diphosphate. Its function is as follows. Catalyzes the attachment of isoleucine to tRNA(Ile). As IleRS can inadvertently accommodate and process structurally similar amino acids such as valine, to avoid such errors it has two additional distinct tRNA(Ile)-dependent editing activities. One activity is designated as 'pretransfer' editing and involves the hydrolysis of activated Val-AMP. The other activity is designated 'posttransfer' editing and involves deacylation of mischarged Val-tRNA(Ile). The protein is Isoleucine--tRNA ligase of Helicobacter pylori (strain ATCC 700392 / 26695) (Campylobacter pylori).